The primary structure comprises 181 residues: Large ribosomal subunit protein uL5 (181 aa).

It belongs to the universal ribosomal protein uL5 family. Part of the 50S ribosomal subunit; part of the 5S rRNA/L5/L18/L25 subcomplex. Contacts the 5S rRNA and the P site tRNA. Forms a bridge to the 30S subunit in the 70S ribosome.

In terms of biological role, this is one of the proteins that bind and probably mediate the attachment of the 5S RNA into the large ribosomal subunit, where it forms part of the central protuberance. In the 70S ribosome it contacts protein S13 of the 30S subunit (bridge B1b), connecting the 2 subunits; this bridge is implicated in subunit movement. Contacts the P site tRNA; the 5S rRNA and some of its associated proteins might help stabilize positioning of ribosome-bound tRNAs. The chain is Large ribosomal subunit protein uL5 from Helicobacter pylori (strain G27).